The chain runs to 613 residues: MEKIYVKIYELSGLEDKDNFSCYIKIYWQNKKYKSCILQKNPYKFNEIFLLPIDIKNNVKDEKNNILSIEVWSSGILNNNKIAYTFFELDHIRRERISSEKINLIDVVKKCTLQISVHIINNNQDILFCNIKDIFGNNKNDKEIHDAILKYGGNERHIIKELRKEKEIGQYNNIYFNDYVNVLNTDPSQNYIYNDMPKITPNNIYNNMNNDQTNHTYLKAPNSLYNNENTIYSSNVHYSTYMNNSPTYKNSNNMNHVTNMYASNDLHNSNHFKPHSNAYSTINYDNNNYIYPQNHTNIYNRASPGSDQTLYFSPCNQKKALLIGINYYGTKYELNGCTNDTLRMKDLLVTKYKFYDSSNNIVRLIDNEANPNYRPTRRNILSALMWLTRDNKPGDILFFLFSGHGSQEKDHNHIEKDGYNESILPSDFETEGVIIDDELHKYLIQPLNEGVKLIAVVDSCNSGSSIDLAYKYKLKSKKWKEDKNPFHVICDVTQFSGCKDKEVSYEVNTGQIAPGGSLVTAMVQILKNNMNTPSIITYEYLLHNIHAHVKQHSNQTVTFMSSQKFNMNRLFDFEHIIKNKNNQLGQIINKYIEKNKSKNKNKLKHELKNLFFF.

Residues His-404 and Cys-460 contribute to the active site.

The protein belongs to the peptidase C14B family. In terms of assembly, monomer.

With respect to regulation, activated by Ca(2+). In terms of biological role, cysteine protease that cleaves specifically after arginine or lysine residues. May play a role in apoptosis. This is Metacaspase-1 from Plasmodium falciparum (isolate 3D7).